Consider the following 31-residue polypeptide: Basic phospholipase A2 13 (31 aa).

This sequence belongs to the phospholipase A2 family. Group I subfamily. It depends on Ca(2+) as a cofactor. Expressed by the venom gland.

The protein localises to the secreted. It carries out the reaction a 1,2-diacyl-sn-glycero-3-phosphocholine + H2O = a 1-acyl-sn-glycero-3-phosphocholine + a fatty acid + H(+). Its function is as follows. Snake venom phospholipase A2 (PLA2) that inhibits neuromuscular transmission by blocking acetylcholine release from the nerve termini. PLA2 catalyzes the calcium-dependent hydrolysis of the 2-acyl groups in 3-sn-phosphoglycerides. The protein is Basic phospholipase A2 13 of Bungarus fasciatus (Banded krait).